We begin with the raw amino-acid sequence, 360 residues long: Peptide chain release factor 1 (360 aa).

The residue at position 235 (Q235) is an N5-methylglutamine. The segment at 281-310 (AERQRQDAAQAESRRLQVGSGDRSQRIRTY) is disordered.

This sequence belongs to the prokaryotic/mitochondrial release factor family. Post-translationally, methylated by PrmC. Methylation increases the termination efficiency of RF1.

It is found in the cytoplasm. Peptide chain release factor 1 directs the termination of translation in response to the peptide chain termination codons UAG and UAA. This chain is Peptide chain release factor 1, found in Stenotrophomonas maltophilia (strain K279a).